Consider the following 142-residue polypeptide: Large ribosomal subunit protein uL16 (142 aa).

The protein belongs to the universal ribosomal protein uL16 family. Part of the 50S ribosomal subunit.

Binds 23S rRNA and is also seen to make contacts with the A and possibly P site tRNAs. This chain is Large ribosomal subunit protein uL16, found in Pseudothermotoga lettingae (strain ATCC BAA-301 / DSM 14385 / NBRC 107922 / TMO) (Thermotoga lettingae).